Reading from the N-terminus, the 38-residue chain is Large ribosomal subunit protein bL36 (38 aa).

This sequence belongs to the bacterial ribosomal protein bL36 family.

The sequence is that of Large ribosomal subunit protein bL36 from Baumannia cicadellinicola subsp. Homalodisca coagulata.